The following is a 56-amino-acid chain: Large ribosomal subunit protein bL32 (56 aa).

A disordered region spans residues 1 to 26; the sequence is MAVQQNKKSRSKRGMRRSHDALSTAQ. The segment covering 7–16 has biased composition (basic residues); it reads KKSRSKRGMR.

Belongs to the bacterial ribosomal protein bL32 family.

This is Large ribosomal subunit protein bL32 from Shewanella denitrificans (strain OS217 / ATCC BAA-1090 / DSM 15013).